Reading from the N-terminus, the 343-residue chain is MKKKWTLEETKMLFKKPFFNLMFQAQEEHRKNFDPNTIQISTLLSIKTGSCPEDCKYCPQSSRYKTGLKKEPLLEIEQILSAAKKAKDSGSSRFCMGAAWKNPKEKDMPYLEKIIKKIKEMGMETCMTLGTLNSTQAKKLADAGLDFYNHNLDTSKNFYSNIITTRTYQERLHTLHAVRSSGMKVCSGGIIGLGEKKQDRIELLIELSNLSIQPESVPINMLVKIPGTPMADNKDVEPFDFIRIIAVARIMMPKSYIRLSAGRHKMNDQTQAMCFMAGANSIFYGCKLLTSDNPEEKHDLELFKKLDLIPENKTQTLLKEDEYKTIIKSSKIKKDQYYNAAII.

Positions 36–254 (NTIQISTLLS…IAVARIMMPK (219 aa)) constitute a Radical SAM core domain. [4Fe-4S] cluster is bound by residues C51, C55, and C58. Residues C95, C126, C186, and R258 each coordinate [2Fe-2S] cluster.

Belongs to the radical SAM superfamily. Biotin synthase family. Homodimer. Requires [4Fe-4S] cluster as cofactor. It depends on [2Fe-2S] cluster as a cofactor.

It carries out the reaction (4R,5S)-dethiobiotin + (sulfur carrier)-SH + 2 reduced [2Fe-2S]-[ferredoxin] + 2 S-adenosyl-L-methionine = (sulfur carrier)-H + biotin + 2 5'-deoxyadenosine + 2 L-methionine + 2 oxidized [2Fe-2S]-[ferredoxin]. It participates in cofactor biosynthesis; biotin biosynthesis; biotin from 7,8-diaminononanoate: step 2/2. Functionally, catalyzes the conversion of dethiobiotin (DTB) to biotin by the insertion of a sulfur atom into dethiobiotin via a radical-based mechanism. This is Biotin synthase from Buchnera aphidicola subsp. Acyrthosiphon pisum (strain 5A).